A 69-amino-acid chain; its full sequence is Large ribosomal subunit protein bL28 (69 aa).

It belongs to the bacterial ribosomal protein bL28 family.

This chain is Large ribosomal subunit protein bL28, found in Lawsonia intracellularis (strain PHE/MN1-00).